The following is an 828-amino-acid chain: Leucine--tRNA ligase (828 aa).

Positions 36 to 46 (PYPSGKIHIGH) match the 'HIGH' region motif. The 'KMSKS' region signature appears at 595 to 599 (KMSKS). Lys598 contacts ATP.

Belongs to the class-I aminoacyl-tRNA synthetase family.

The protein localises to the cytoplasm. The catalysed reaction is tRNA(Leu) + L-leucine + ATP = L-leucyl-tRNA(Leu) + AMP + diphosphate. This chain is Leucine--tRNA ligase, found in Rickettsia prowazekii (strain Madrid E).